The primary structure comprises 197 residues: Putative ankyrin repeat protein R875 (197 aa).

ANK repeat units lie at residues 78–106 (LNKCLIGYCISGRLDIVKYLVILGADIRE), 107–136 (NDDCVVRTACHNGHIEVVKYLVNQGADIRA), 138–166 (DDDAIRLASKNGHLYVVKYLVSQGVNFRK), and 168–196 (NDYEINWASQNGHGSVVDFLVSKGAVLHE).

This is Putative ankyrin repeat protein R875 from Acanthamoeba polyphaga mimivirus (APMV).